Reading from the N-terminus, the 105-residue chain is Large ribosomal subunit protein uL22 (105 aa).

It belongs to the universal ribosomal protein uL22 family. Part of the 50S ribosomal subunit.

Its function is as follows. This protein binds specifically to 23S rRNA; its binding is stimulated by other ribosomal proteins, e.g. L4, L17, and L20. It is important during the early stages of 50S assembly. It makes multiple contacts with different domains of the 23S rRNA in the assembled 50S subunit and ribosome. In terms of biological role, the globular domain of the protein is located near the polypeptide exit tunnel on the outside of the subunit, while an extended beta-hairpin is found that lines the wall of the exit tunnel in the center of the 70S ribosome. This chain is Large ribosomal subunit protein uL22, found in Sulfurimonas denitrificans (strain ATCC 33889 / DSM 1251) (Thiomicrospira denitrificans (strain ATCC 33889 / DSM 1251)).